The primary structure comprises 1444 residues: DNA polymerase III PolC-type (1444 aa).

The Exonuclease domain maps to 428–584; that stretch reads YCVFDVETTG…FDAEATAYLA (157 aa).

This sequence belongs to the DNA polymerase type-C family. PolC subfamily.

It localises to the cytoplasm. The enzyme catalyses DNA(n) + a 2'-deoxyribonucleoside 5'-triphosphate = DNA(n+1) + diphosphate. Its function is as follows. Required for replicative DNA synthesis. This DNA polymerase also exhibits 3' to 5' exonuclease activity. This chain is DNA polymerase III PolC-type, found in Listeria monocytogenes serovar 1/2a (strain ATCC BAA-679 / EGD-e).